The sequence spans 318 residues: Ubiquinol oxidase, mitochondrial (318 aa).

The transit peptide at 1–46 (MTVMRGLLNGGRYGNRYIWTAISLRHPEVMEGNGLESAVMQWRRML) directs the protein to the mitochondrion. A helical transmembrane segment spans residues 143-163 (AMMLETVAAVPGMVGGMLLHL). Fe cation is bound by residues Glu-147, Glu-186, and His-189. The helical transmembrane segment at 205 to 225 (LLVLAVQGVFFNSFFVLYVLS) threads the bilayer. Fe cation-binding residues include Glu-237, Glu-288, and His-291.

This sequence belongs to the alternative oxidase family. As to quaternary structure, homodimer; disulfide-linked. Requires Fe cation as cofactor.

It localises to the mitochondrion inner membrane. It catalyses the reaction 2 a ubiquinol + O2 = 2 a ubiquinone + 2 H2O. Functionally, catalyzes the cyanide-resistant oxidation of ubiquinol and the reduction of molecular oxygen to water, but does not translocate protons and consequently is not linked to oxidative phosphorylation. May increase respiration when the cytochrome respiratory pathway is restricted, or in response to low temperatures. The protein is Ubiquinol oxidase, mitochondrial (AOMI 1) of Mangifera indica (Mango).